We begin with the raw amino-acid sequence, 317 residues long: Beta-ketoacyl-[acyl-carrier-protein] synthase III (317 aa).

Active-site residues include cysteine 112 and histidine 244. Positions glutamine 245 to arginine 249 are ACP-binding. Asparagine 274 is a catalytic residue.

It belongs to the thiolase-like superfamily. FabH family. Homodimer.

The protein localises to the cytoplasm. The enzyme catalyses malonyl-[ACP] + acetyl-CoA + H(+) = 3-oxobutanoyl-[ACP] + CO2 + CoA. The protein operates within lipid metabolism; fatty acid biosynthesis. Functionally, catalyzes the condensation reaction of fatty acid synthesis by the addition to an acyl acceptor of two carbons from malonyl-ACP. Catalyzes the first condensation reaction which initiates fatty acid synthesis and may therefore play a role in governing the total rate of fatty acid production. Possesses both acetoacetyl-ACP synthase and acetyl transacylase activities. Its substrate specificity determines the biosynthesis of branched-chain and/or straight-chain of fatty acids. This Baumannia cicadellinicola subsp. Homalodisca coagulata protein is Beta-ketoacyl-[acyl-carrier-protein] synthase III.